We begin with the raw amino-acid sequence, 256 residues long: Astacin-like metalloprotease toxin 2 (256 aa).

Positions 1–24 are cleaved as a signal peptide; the sequence is MIPDVGFLVLLTGALFICIKAAPA. A propeptide spanning residues 25–52 is cleaved from the precursor; that stretch reads TTDVDPTFEGRIVMEGDILIREEQLTER. Positions 53 to 250 constitute a Peptidase M12A domain; the sequence is NAIALENMRW…KKINTLYNCP (198 aa). 2 disulfides stabilise this stretch: Cys94–Cys249 and Cys117–Cys136. His144 is a binding site for Zn(2+). Residue Glu145 is part of the active site. Zn(2+) is bound by residues His148 and His154.

In terms of assembly, monomer. Zn(2+) serves as cofactor. In terms of tissue distribution, expressed by the venom gland.

The protein resides in the secreted. With respect to regulation, inhibited by 1,10-phenanthroline. Zinc metalloprotease. Provoques deadhesion of endothelial cells from cell cultures, and also degradation of fibronectin, fibrinogen and gelatin in vitro. Its role in the venom is not fully understood but it might act as a spreading factor that facilitates diffusion of other venom toxins. Alternatively, it might be involved in the proteolytic processing of other venom toxins or it might play a role in extra-oral digestion of prey. The polypeptide is Astacin-like metalloprotease toxin 2 (Loxosceles intermedia (Brown spider)).